We begin with the raw amino-acid sequence, 202 residues long: ATP-dependent Clp protease proteolytic subunit (202 aa).

Ser-101 (nucleophile) is an active-site residue. His-126 is an active-site residue.

It belongs to the peptidase S14 family. As to quaternary structure, component of the chloroplastic Clp protease core complex.

The protein resides in the plastid. The protein localises to the chloroplast stroma. The catalysed reaction is Hydrolysis of proteins to small peptides in the presence of ATP and magnesium. alpha-casein is the usual test substrate. In the absence of ATP, only oligopeptides shorter than five residues are hydrolyzed (such as succinyl-Leu-Tyr-|-NHMec, and Leu-Tyr-Leu-|-Tyr-Trp, in which cleavage of the -Tyr-|-Leu- and -Tyr-|-Trp bonds also occurs).. Cleaves peptides in various proteins in a process that requires ATP hydrolysis. Has a chymotrypsin-like activity. Plays a major role in the degradation of misfolded proteins. This chain is ATP-dependent Clp protease proteolytic subunit, found in Acorus gramineus (Dwarf sweet flag).